We begin with the raw amino-acid sequence, 122 residues long: Large ribosomal subunit protein uL14 (122 aa).

It belongs to the universal ribosomal protein uL14 family. In terms of assembly, part of the 50S ribosomal subunit. Forms a cluster with proteins L3 and L19. In the 70S ribosome, L14 and L19 interact and together make contacts with the 16S rRNA in bridges B5 and B8.

Its function is as follows. Binds to 23S rRNA. Forms part of two intersubunit bridges in the 70S ribosome. This Maridesulfovibrio salexigens (strain ATCC 14822 / DSM 2638 / NCIMB 8403 / VKM B-1763) (Desulfovibrio salexigens) protein is Large ribosomal subunit protein uL14.